Here is a 463-residue protein sequence, read N- to C-terminus: ATP synthase subunit beta (463 aa).

152 to 159 provides a ligand contact to ATP; that stretch reads GGAGVGKT.

The protein belongs to the ATPase alpha/beta chains family. F-type ATPases have 2 components, CF(1) - the catalytic core - and CF(0) - the membrane proton channel. CF(1) has five subunits: alpha(3), beta(3), gamma(1), delta(1), epsilon(1). CF(0) has three main subunits: a(1), b(2) and c(9-12). The alpha and beta chains form an alternating ring which encloses part of the gamma chain. CF(1) is attached to CF(0) by a central stalk formed by the gamma and epsilon chains, while a peripheral stalk is formed by the delta and b chains.

The protein localises to the cell inner membrane. It carries out the reaction ATP + H2O + 4 H(+)(in) = ADP + phosphate + 5 H(+)(out). Produces ATP from ADP in the presence of a proton gradient across the membrane. The catalytic sites are hosted primarily by the beta subunits. The sequence is that of ATP synthase subunit beta from Shewanella putrefaciens (strain CN-32 / ATCC BAA-453).